Reading from the N-terminus, the 293-residue chain is Protease HtpX (293 aa).

A run of 2 helical transmembrane segments spans residues 4–24 (IALF…VLSL) and 34–54 (GLMI…LLMS). H139 is a Zn(2+) binding site. The active site involves E140. H143 lines the Zn(2+) pocket. The next 2 membrane-spanning stretches (helical) occupy residues 158 to 178 (IVNT…SGFL) and 193 to 213 (MVYF…ASII). E222 contacts Zn(2+).

It belongs to the peptidase M48B family. Zn(2+) serves as cofactor.

It is found in the cell inner membrane. In Pectobacterium atrosepticum (strain SCRI 1043 / ATCC BAA-672) (Erwinia carotovora subsp. atroseptica), this protein is Protease HtpX.